A 378-amino-acid chain; its full sequence is Lipoyl synthase, mitochondrial (378 aa).

Residues cysteine 109, cysteine 114, cysteine 120, cysteine 140, cysteine 144, cysteine 147, and serine 356 each coordinate [4Fe-4S] cluster. Residues 125 to 345 enclose the Radical SAM core domain; it reads ETGTATATIM…QTLGMEMGFR (221 aa).

It belongs to the radical SAM superfamily. Lipoyl synthase family. The cofactor is [4Fe-4S] cluster.

The protein localises to the mitochondrion. The enzyme catalyses [[Fe-S] cluster scaffold protein carrying a second [4Fe-4S](2+) cluster] + N(6)-octanoyl-L-lysyl-[protein] + 2 oxidized [2Fe-2S]-[ferredoxin] + 2 S-adenosyl-L-methionine + 4 H(+) = [[Fe-S] cluster scaffold protein] + N(6)-[(R)-dihydrolipoyl]-L-lysyl-[protein] + 4 Fe(3+) + 2 hydrogen sulfide + 2 5'-deoxyadenosine + 2 L-methionine + 2 reduced [2Fe-2S]-[ferredoxin]. It participates in protein modification; protein lipoylation via endogenous pathway; protein N(6)-(lipoyl)lysine from octanoyl-[acyl-carrier-protein]: step 2/2. Catalyzes the radical-mediated insertion of two sulfur atoms into the C-6 and C-8 positions of the octanoyl moiety bound to the lipoyl domains of lipoate-dependent enzymes, thereby converting the octanoylated domains into lipoylated derivatives. This Medicago truncatula (Barrel medic) protein is Lipoyl synthase, mitochondrial.